Consider the following 196-residue polypeptide: Hypoxanthine/guanine phosphoribosyltransferase (196 aa).

This sequence belongs to the purine/pyrimidine phosphoribosyltransferase family. Archaeal HPRT subfamily. In terms of assembly, homodimer.

It localises to the cytoplasm. The enzyme catalyses IMP + diphosphate = hypoxanthine + 5-phospho-alpha-D-ribose 1-diphosphate. It carries out the reaction GMP + diphosphate = guanine + 5-phospho-alpha-D-ribose 1-diphosphate. Its pathway is purine metabolism; IMP biosynthesis via salvage pathway; IMP from hypoxanthine: step 1/1. In terms of biological role, catalyzes a salvage reaction resulting in the formation of IMP that is energically less costly than de novo synthesis. The polypeptide is Hypoxanthine/guanine phosphoribosyltransferase (Methanocaldococcus sp. (strain FS406-22)).